A 478-amino-acid polypeptide reads, in one-letter code: Cysteine protease ATG4B (478 aa).

The span at 1-15 (MTSLPDRGVSSSSSD) shows a compositional bias: polar residues. Residues 1–31 (MTSLPDRGVSSSSSDPLCEGNIAPCSSSSEQ) form a disordered region. Residue Cys164 is the Nucleophile of the active site. Active-site residues include Asp361 and His363.

This sequence belongs to the peptidase C54 family. Interacts with ATG8.

It is found in the cytoplasm. It catalyses the reaction [protein]-C-terminal L-amino acid-glycyl-phosphatidylethanolamide + H2O = [protein]-C-terminal L-amino acid-glycine + a 1,2-diacyl-sn-glycero-3-phosphoethanolamine. Its function is as follows. Cysteine protease that plays a key role in autophagy by mediating both proteolytic activation and delipidation of ATG8 family proteins. The protease activity is required for proteolytic activation of ATG8 family proteins: cleaves the C-terminal amino acid of ATG8 proteins to reveal a C-terminal glycine. Exposure of the glycine at the C-terminus is essential for ATG8 proteins conjugation to phosphatidylethanolamine (PE) and insertion to membranes, which is necessary for autophagy. In addition to the protease activity, also mediates delipidation of PE-conjugated ATG8 proteins. In Oryza sativa subsp. japonica (Rice), this protein is Cysteine protease ATG4B (ATG4B).